Reading from the N-terminus, the 200-residue chain is dITP/XTP pyrophosphatase (200 aa).

7-12 (TSNKHK) is a binding site for substrate. Mg(2+) is bound by residues Glu-38 and Asp-73. The active-site Proton acceptor is Asp-73. Residues Ser-74, 154-157 (FGYD), Lys-177, and 182-183 (HR) each bind substrate.

This sequence belongs to the HAM1 NTPase family. In terms of assembly, homodimer. The cofactor is Mg(2+).

It carries out the reaction XTP + H2O = XMP + diphosphate + H(+). The enzyme catalyses dITP + H2O = dIMP + diphosphate + H(+). It catalyses the reaction ITP + H2O = IMP + diphosphate + H(+). Its function is as follows. Pyrophosphatase that catalyzes the hydrolysis of nucleoside triphosphates to their monophosphate derivatives, with a high preference for the non-canonical purine nucleotides XTP (xanthosine triphosphate), dITP (deoxyinosine triphosphate) and ITP. Seems to function as a house-cleaning enzyme that removes non-canonical purine nucleotides from the nucleotide pool, thus preventing their incorporation into DNA/RNA and avoiding chromosomal lesions. This Campylobacter jejuni subsp. jejuni serotype O:2 (strain ATCC 700819 / NCTC 11168) protein is dITP/XTP pyrophosphatase.